A 364-amino-acid polypeptide reads, in one-letter code: D-alanine--D-alanine ligase (364 aa).

One can recognise an ATP-grasp domain in the interval Lys146–Leu352. Thr179 to Glu234 contributes to the ATP binding site. Mg(2+)-binding residues include Asp305, Glu319, and Asn321.

It belongs to the D-alanine--D-alanine ligase family. Mg(2+) serves as cofactor. It depends on Mn(2+) as a cofactor.

It is found in the cytoplasm. It carries out the reaction 2 D-alanine + ATP = D-alanyl-D-alanine + ADP + phosphate + H(+). Its pathway is cell wall biogenesis; peptidoglycan biosynthesis. In terms of biological role, cell wall formation. This is D-alanine--D-alanine ligase from Chlorobaculum tepidum (strain ATCC 49652 / DSM 12025 / NBRC 103806 / TLS) (Chlorobium tepidum).